The following is a 235-amino-acid chain: Large ribosomal subunit protein uL1 (235 aa).

This sequence belongs to the universal ribosomal protein uL1 family. As to quaternary structure, part of the 50S ribosomal subunit.

Its function is as follows. Binds directly to 23S rRNA. The L1 stalk is quite mobile in the ribosome, and is involved in E site tRNA release. Protein L1 is also a translational repressor protein, it controls the translation of the L11 operon by binding to its mRNA. This is Large ribosomal subunit protein uL1 from Halothermothrix orenii (strain H 168 / OCM 544 / DSM 9562).